We begin with the raw amino-acid sequence, 395 residues long: Acid ceramidase (395 aa).

The signal sequence occupies residues 1–21; sequence MLGRSRLTFVLLSVTVTCSVA. A disulfide bridge links Cys-31 with Cys-340. The active-site Nucleophile is Cys-143. 4 N-linked (GlcNAc...) asparagine glycosylation sites follow: Asn-173, Asn-259, Asn-342, and Asn-348. Cys-388 and Cys-392 form a disulfide bridge.

This sequence belongs to the acid ceramidase family. As to quaternary structure, heterodimer; disulfide-linked. The heterodimer is composed of the disulfide-linked alpha and beta chains produced by autocatalytic cleavage of the precursor. Post-translationally, N-glycosylated. Proteolytically cleaved into two chains alpha and beta that remain associated via a disulfide bond. Cleavage gives rise to a conformation change that activates the enzyme. The same catalytic Cys residue mediates the autoproteolytic cleavage and subsequent hydrolysis of lipid substrates. The beta chain may undergo an additional C-terminal processing.

The protein localises to the lysosome. It localises to the secreted. It catalyses the reaction an N-acylsphing-4-enine + H2O = sphing-4-enine + a fatty acid. The catalysed reaction is N-dodecanoylsphing-4-enine + H2O = dodecanoate + sphing-4-enine. It carries out the reaction N-tetradecanoylsphing-4-enine + H2O = tetradecanoate + sphing-4-enine. The enzyme catalyses N-hexadecanoylsphing-4-enine + H2O = sphing-4-enine + hexadecanoate. It catalyses the reaction N-octadecanoylsphing-4-enine + H2O = sphing-4-enine + octadecanoate. The catalysed reaction is N-dodecanoyl-(4R)-hydroxysphinganine + H2O = (4R)-hydroxysphinganine + dodecanoate. It carries out the reaction N-(dodecanoyl)-sphinganine + H2O = dodecanoate + sphinganine. The enzyme catalyses N-(acetyl)-sphing-4-enine + H2O = sphing-4-enine + acetate. It catalyses the reaction N-(hexanoyl)sphing-4-enine + H2O = hexanoate + sphing-4-enine. The catalysed reaction is N-octanoylsphing-4-enine + H2O = octanoate + sphing-4-enine. It carries out the reaction N-(9Z-octadecenoyl)-sphing-4-enine + H2O = sphing-4-enine + (9Z)-octadecenoate. The enzyme catalyses N-dodecanoylethanolamine + H2O = dodecanoate + ethanolamine. It participates in lipid metabolism; sphingolipid metabolism. Lysosomal ceramidase that hydrolyzes sphingolipid ceramides into sphingosine and free fatty acids at acidic pH. Ceramides, sphingosine, and its phosphorylated form sphingosine-1-phosphate are bioactive lipids that mediate cellular signaling pathways regulating several biological processes including cell proliferation, apoptosis and differentiation. Has a higher catalytic efficiency towards C12-ceramides versus other ceramides. Also catalyzes the reverse reaction allowing the synthesis of ceramides from fatty acids and sphingosine. For the reverse synthetic reaction, the natural sphingosine D-erythro isomer is more efficiently utilized as a substrate compared to D-erythro-dihydrosphingosine and D-erythro-phytosphingosine, while the fatty acids with chain lengths of 12 or 14 carbons are the most efficiently used. Also has an N-acylethanolamine hydrolase activity. By regulating the levels of ceramides, sphingosine and sphingosine-1-phosphate in the epidermis, mediates the calcium-induced differentiation of epidermal keratinocytes. Also indirectly regulates tumor necrosis factor/TNF-induced apoptosis. By regulating the intracellular balance between ceramides and sphingosine, in adrenocortical cells, probably also acts as a regulator of steroidogenesis. This chain is Acid ceramidase, found in Balaenoptera acutorostrata scammoni (North Pacific minke whale).